The following is a 92-amino-acid chain: Large ribosomal subunit protein bL25 (92 aa).

This sequence belongs to the bacterial ribosomal protein bL25 family. As to quaternary structure, part of the 50S ribosomal subunit; part of the 5S rRNA/L5/L18/L25 subcomplex. Contacts the 5S rRNA. Binds to the 5S rRNA independently of L5 and L18.

Its function is as follows. This is one of the proteins that binds to the 5S RNA in the ribosome where it forms part of the central protuberance. This Photobacterium damsela subsp. piscicida (Pasteurella piscicida) protein is Large ribosomal subunit protein bL25.